The sequence spans 428 residues: Histidine--tRNA ligase (428 aa).

It belongs to the class-II aminoacyl-tRNA synthetase family. As to quaternary structure, homodimer.

It is found in the cytoplasm. It carries out the reaction tRNA(His) + L-histidine + ATP = L-histidyl-tRNA(His) + AMP + diphosphate + H(+). The protein is Histidine--tRNA ligase (hisS) of Chlamydia muridarum (strain MoPn / Nigg).